The chain runs to 204 residues: Ribonuclease HII (204 aa).

Positions 16–204 constitute an RNase H type-2 domain; that stretch reads ESIAGCDEVG…RRSFLKKILK (189 aa). A divalent metal cation contacts are provided by Asp-22, Glu-23, and Asp-120.

Belongs to the RNase HII family. It depends on Mn(2+) as a cofactor. Mg(2+) is required as a cofactor.

It is found in the cytoplasm. It catalyses the reaction Endonucleolytic cleavage to 5'-phosphomonoester.. In terms of biological role, endonuclease that specifically degrades the RNA of RNA-DNA hybrids. This is Ribonuclease HII from Alkaliphilus metalliredigens (strain QYMF).